A 209-amino-acid chain; its full sequence is Uracil phosphoribosyltransferase (209 aa).

Residues Arg79, Arg104, and 131–139 (DPMLATGGS) contribute to the 5-phospho-alpha-D-ribose 1-diphosphate site. Residues Ile194 and 199–201 (GDA) each bind uracil. Residue Asp200 participates in 5-phospho-alpha-D-ribose 1-diphosphate binding.

The protein belongs to the UPRTase family. The cofactor is Mg(2+).

It carries out the reaction UMP + diphosphate = 5-phospho-alpha-D-ribose 1-diphosphate + uracil. It functions in the pathway pyrimidine metabolism; UMP biosynthesis via salvage pathway; UMP from uracil: step 1/1. Its activity is regulated as follows. Allosterically activated by GTP. Its function is as follows. Catalyzes the conversion of uracil and 5-phospho-alpha-D-ribose 1-diphosphate (PRPP) to UMP and diphosphate. The sequence is that of Uracil phosphoribosyltransferase from Streptococcus thermophilus (strain CNRZ 1066).